Consider the following 236-residue polypeptide: Bacterial rhodopsin CSR3 (236 aa).

Over 1–3 the chain is Extracellular; that stretch reads MDA. Residues 4-25 traverse the membrane as a helical segment; the sequence is VAVVYGITAAGFAVGVAIVGYL. Over 26–34 the chain is Cytoplasmic; that stretch reads YASLEGSEE. A helical transmembrane segment spans residues 35–56; it reads RSILAALALIPGFAGISYVAMA. Residues 57 to 70 lie on the Extracellular side of the membrane; that stretch reads FGIGTVTIGETTLV. A helical membrane pass occupies residues 71-92; sequence GFRYLDWVVTTPLLVGFVGYAA. Residues 93–95 lie on the Cytoplasmic side of the membrane; the sequence is GAS. The chain crosses the membrane as a helical span at residues 96 to 118; sequence RRAIFGVMVADALMILTGVGAVV. Over 119–122 the chain is Extracellular; that stretch reads ADGT. A helical membrane pass occupies residues 123-150; the sequence is LKWVLFGVSTVFHVSLFAYLYLVFPRSV. The Cytoplasmic segment spans residues 151–153; it reads PDD. A helical membrane pass occupies residues 154-181; that stretch reads PQRIGLFSLLKNHIGLLWIAYPLVWLAG. The Extracellular portion of the chain corresponds to 182 to 189; the sequence is PEGLGLAT. Residues 190-222 traverse the membrane as a helical segment; sequence YVGVSITYAFLDLLAKVPYVYFFYARRQVFATK. Lys205 carries the post-translational modification N6-(retinylidene)lysine. Over 223 to 236 the chain is Cytoplasmic; the sequence is LLRDSGEVTATPAD.

This sequence belongs to the archaeal/bacterial/fungal opsin family.

Its subcellular location is the cell membrane. This chain is Bacterial rhodopsin CSR3, found in Haloarcula vallismortis (Halobacterium vallismortis).